The primary structure comprises 266 residues: MPEVTLTTLNGLKAKGEKITMLTCYDATFAKAASQAGVEVLLVGDSLGMVLQGHDSTLPVTTAEMAYHTASVKRGNDGALILTDLPFMAHATPEQAFANSATLMQAGAHMVKIEGAAWLAETIRLLAERGVPVCAHMGLTPQTVNVLGGYKVQGRQEAQARQMRADAIALEQAGAAMLLLECVPSELAAEITNAVGIPVIGIGAGSATDGQVLVLHDMLGLSLSGRVPKFVKNFMQGQPDIHSALVAYVEAVKQVSFPGSEHGFSA.

Positions 45 and 84 each coordinate Mg(2+). 3-methyl-2-oxobutanoate is bound by residues 45 to 46 (DS), Asp-84, and Lys-112. Residue Glu-114 coordinates Mg(2+). Residue Glu-181 is the Proton acceptor of the active site.

It belongs to the PanB family. As to quaternary structure, homodecamer; pentamer of dimers. It depends on Mg(2+) as a cofactor.

The protein localises to the cytoplasm. The catalysed reaction is 3-methyl-2-oxobutanoate + (6R)-5,10-methylene-5,6,7,8-tetrahydrofolate + H2O = 2-dehydropantoate + (6S)-5,6,7,8-tetrahydrofolate. It functions in the pathway cofactor biosynthesis; (R)-pantothenate biosynthesis; (R)-pantoate from 3-methyl-2-oxobutanoate: step 1/2. Functionally, catalyzes the reversible reaction in which hydroxymethyl group from 5,10-methylenetetrahydrofolate is transferred onto alpha-ketoisovalerate to form ketopantoate. This is 3-methyl-2-oxobutanoate hydroxymethyltransferase from Pseudomonas putida (strain ATCC 700007 / DSM 6899 / JCM 31910 / BCRC 17059 / LMG 24140 / F1).